Here is a 637-residue protein sequence, read N- to C-terminus: Clathrin coat assembly protein AP180A (637 aa).

The ENTH domain maps to 1–126 (MTTYFKLVKG…REFGKIKKDY (126 aa)). The segment at 555–637 (TQNHLQQQQQ…YANNLNLIDM (83 aa)) is disordered. 2 stretches are compositionally biased toward low complexity: residues 560–579 (QQQQ…QPQQ) and 600–622 (QPQN…TQQP). The tract at residues 587 to 637 (AGANPVTNITGTVQPQNFPFYPQQQPQPEQSQTQQPVLGNQYANNLNLIDM) is clathrin-binding. Polar residues predominate over residues 623 to 637 (VLGNQYANNLNLIDM).

The protein belongs to the AP180 family. In terms of assembly, interacts with PAN1 and the clathrin heavy and light chains CHC1 and CLC1.

It is found in the bud. Its subcellular location is the bud neck. It localises to the cell membrane. The protein localises to the cytoplasm. Involved in endocytosis and clathrin cage assembly. The polypeptide is Clathrin coat assembly protein AP180A (YAP1801) (Saccharomyces cerevisiae (strain ATCC 204508 / S288c) (Baker's yeast)).